Reading from the N-terminus, the 216-residue chain is Probable GTP-binding protein EngB (216 aa).

The EngB-type G domain maps to D21–G192. GTP is bound by residues G29–S36, G56–S60, D75–G78, T142–D145, and V170–S173. 2 residues coordinate Mg(2+): S36 and T58. Residues S195–A216 are disordered. The span at A196–A216 shows a compositional bias: acidic residues.

Belongs to the TRAFAC class TrmE-Era-EngA-EngB-Septin-like GTPase superfamily. EngB GTPase family. Requires Mg(2+) as cofactor.

Its function is as follows. Necessary for normal cell division and for the maintenance of normal septation. In Nitratidesulfovibrio vulgaris (strain DP4) (Desulfovibrio vulgaris), this protein is Probable GTP-binding protein EngB.